Here is a 220-residue protein sequence, read N- to C-terminus: 7-cyano-7-deazaguanine synthase (220 aa).

7 to 17 serves as a coordination point for ATP; that stretch reads LSGGLDSAVCL. Zn(2+) contacts are provided by cysteine 191, cysteine 199, cysteine 202, and cysteine 205.

The protein belongs to the QueC family. As to quaternary structure, homodimer. It depends on Zn(2+) as a cofactor.

The enzyme catalyses 7-carboxy-7-deazaguanine + NH4(+) + ATP = 7-cyano-7-deazaguanine + ADP + phosphate + H2O + H(+). Its pathway is purine metabolism; 7-cyano-7-deazaguanine biosynthesis. Functionally, catalyzes the ATP-dependent conversion of 7-carboxy-7-deazaguanine (CDG) to 7-cyano-7-deazaguanine (preQ(0)). This is 7-cyano-7-deazaguanine synthase from Desulforudis audaxviator (strain MP104C).